A 534-amino-acid chain; its full sequence is MFS transporter fmqE (534 aa).

12 consecutive transmembrane segments (helical) span residues 48 to 68 (LLLF…VCAS), 109 to 129 (LWTS…GFLA), 136 to 156 (WTAV…VFSS), 169 to 189 (GAVV…VAPI), 194 to 214 (ALLQ…LGIV), 228 to 248 (IVFG…FLVP), 326 to 346 (AIGV…GLNV), 349 to 369 (VFDI…LGWL), 379 to 399 (LWLW…ALGF), 407 to 427 (LAIA…TVGV), 447 to 467 (VAFI…PYMY), and 478 to 498 (TGFV…FLVP).

It belongs to the major facilitator superfamily. Sugar transporter (TC 2.A.1.1) family.

The protein localises to the cytoplasmic vesicle membrane. MFS transporter; part of the gene cluster that mediates the biosynthesis of the antitumor cytotoxic peptidyl alkaloids fumiquinazolines that confer a dual-usage capability to defend against phagocytes in the environment and animal hosts. Probably involved in fumiquinazolines metabolism and transport. The polypeptide is MFS transporter fmqE (Aspergillus fumigatus (strain ATCC MYA-4609 / CBS 101355 / FGSC A1100 / Af293) (Neosartorya fumigata)).